Here is a 251-residue protein sequence, read N- to C-terminus: uncharacterized protein (251 aa).

This sequence belongs to the chlamydial CPn_0206/CT_203/TC_0475 family.

This is an uncharacterized protein from Chlamydia trachomatis serovar D (strain ATCC VR-885 / DSM 19411 / UW-3/Cx).